The chain runs to 472 residues: Type I restriction enzyme BthVORF4518P methylase subunit (472 aa).

Residues Gln151–Arg156, Thr181–Gly183, Asp214, and Asp243–Ser244 contribute to the S-adenosyl-L-methionine site.

Belongs to the N(4)/N(6)-methyltransferase family. The type I restriction/modification system is composed of three polypeptides R, M and S; the restriction enzyme has stoichiometry R(2)M(2)S(1) while the methyltransferase is M(2)S(1).

It catalyses the reaction a 2'-deoxyadenosine in DNA + S-adenosyl-L-methionine = an N(6)-methyl-2'-deoxyadenosine in DNA + S-adenosyl-L-homocysteine + H(+). Functionally, the subtype gamma methyltransferase (M) subunit of a type I restriction enzyme. The M and S subunits together form a methyltransferase (MTase) that methylates two adenine residues of an undetermined sequence. In the presence of the R subunit the complex can also act as an endonuclease, binding to the same target sequence but cutting the DNA some distance from this site. Whether the DNA is cut or modified depends on the methylation state of the target sequence. When the target site is unmodified, the DNA is cut. When the target site is hemimethylated, the complex acts as a maintenance MTase modifying the DNA so that both strands become methylated. After locating a non-methylated recognition site, the enzyme complex serves as a molecular motor that translocates DNA in an ATP-dependent manner until a collision occurs that triggers cleavage. The protein is Type I restriction enzyme BthVORF4518P methylase subunit of Bacteroides thetaiotaomicron (strain ATCC 29148 / DSM 2079 / JCM 5827 / CCUG 10774 / NCTC 10582 / VPI-5482 / E50).